A 425-amino-acid polypeptide reads, in one-letter code: Serine hydroxymethyltransferase 2 (425 aa).

(6S)-5,6,7,8-tetrahydrofolate contacts are provided by residues L121 and 125–127 (GHL). K230 is subject to N6-(pyridoxal phosphate)lysine.

The protein belongs to the SHMT family. As to quaternary structure, homodimer. Pyridoxal 5'-phosphate is required as a cofactor.

The protein localises to the cytoplasm. It catalyses the reaction (6R)-5,10-methylene-5,6,7,8-tetrahydrofolate + glycine + H2O = (6S)-5,6,7,8-tetrahydrofolate + L-serine. Its pathway is one-carbon metabolism; tetrahydrofolate interconversion. It functions in the pathway amino-acid biosynthesis; glycine biosynthesis; glycine from L-serine: step 1/1. Its function is as follows. Catalyzes the reversible interconversion of serine and glycine with tetrahydrofolate (THF) serving as the one-carbon carrier. This reaction serves as the major source of one-carbon groups required for the biosynthesis of purines, thymidylate, methionine, and other important biomolecules. Also exhibits THF-independent aldolase activity toward beta-hydroxyamino acids, producing glycine and aldehydes, via a retro-aldol mechanism. The polypeptide is Serine hydroxymethyltransferase 2 (Mycobacterium tuberculosis (strain CDC 1551 / Oshkosh)).